A 370-amino-acid chain; its full sequence is Putative agmatine deiminase (370 aa).

Cys361 serves as the catalytic Amidino-cysteine intermediate.

Belongs to the agmatine deiminase family.

It catalyses the reaction agmatine + H2O = N-carbamoylputrescine + NH4(+). The protein is Putative agmatine deiminase of Shewanella baltica (strain OS223).